A 433-amino-acid chain; its full sequence is Glutamate-1-semialdehyde 2,1-aminomutase (433 aa).

Lys273 carries the post-translational modification N6-(pyridoxal phosphate)lysine.

It belongs to the class-III pyridoxal-phosphate-dependent aminotransferase family. HemL subfamily. As to quaternary structure, homodimer. The cofactor is pyridoxal 5'-phosphate.

It localises to the cytoplasm. It catalyses the reaction (S)-4-amino-5-oxopentanoate = 5-aminolevulinate. The protein operates within porphyrin-containing compound metabolism; protoporphyrin-IX biosynthesis; 5-aminolevulinate from L-glutamyl-tRNA(Glu): step 2/2. The protein is Glutamate-1-semialdehyde 2,1-aminomutase of Ralstonia nicotianae (strain ATCC BAA-1114 / GMI1000) (Ralstonia solanacearum).